A 436-amino-acid chain; its full sequence is L-threonine dehydratase biosynthetic IlvA (436 aa).

The interval 1 to 357 (MSETYVSEKS…HRGLKHYFLV (357 aa)) is catalytic. An N6-(pyridoxal phosphate)lysine modification is found at lysine 70. Residues asparagine 97, 203-207 (GGGGL), and serine 329 contribute to the pyridoxal 5'-phosphate site. The ACT-like domain maps to 353-427 (HYFLVNFPQK…SAIDSRRLEP (75 aa)). The tract at residues 358–436 (NFPQKPGQLR…PGTPEYEYLT (79 aa)) is regulatory.

It belongs to the serine/threonine dehydratase family. As to quaternary structure, homotetramer. The cofactor is pyridoxal 5'-phosphate.

The catalysed reaction is L-threonine = 2-oxobutanoate + NH4(+). The protein operates within amino-acid biosynthesis; L-isoleucine biosynthesis; 2-oxobutanoate from L-threonine: step 1/1. Functionally, catalyzes the anaerobic formation of alpha-ketobutyrate and ammonia from threonine in a two-step reaction. The first step involved a dehydration of threonine and a production of enamine intermediates (aminocrotonate), which tautomerizes to its imine form (iminobutyrate). Both intermediates are unstable and short-lived. The second step is the nonenzymatic hydrolysis of the enamine/imine intermediates to form 2-ketobutyrate and free ammonia. In the low water environment of the cell, the second step is accelerated by RidA. The polypeptide is L-threonine dehydratase biosynthetic IlvA (ilvA) (Corynebacterium glutamicum (strain ATCC 13032 / DSM 20300 / JCM 1318 / BCRC 11384 / CCUG 27702 / LMG 3730 / NBRC 12168 / NCIMB 10025 / NRRL B-2784 / 534)).